Reading from the N-terminus, the 166-residue chain is Cytochrome P450 regulator dap1 (166 aa).

A helical transmembrane segment spans residues 4–21 (TQVVFIVTLFLYLLITRW). A Cytochrome b5 heme-binding domain is found at 42-145 (DYTPAELKEY…QKYQAVGRLI (104 aa)). At Ser-108 the chain carries Phosphoserine. Residue Tyr-138 participates in heme binding.

It belongs to the cytochrome b5 family. MAPR subfamily. As to quaternary structure, interacts with erg5 and erg11.

It is found in the endoplasmic reticulum. It localises to the membrane. Functionally, required for sterol biosynthesis. Functions as a positive regulator of cytochrome P450 enzymes erg5 and erg11. Function requires bound heme. This Schizosaccharomyces pombe (strain 972 / ATCC 24843) (Fission yeast) protein is Cytochrome P450 regulator dap1 (dap1).